The chain runs to 197 residues: Large ribosomal subunit protein eL15 (197 aa).

Residues 163 to 172 are compositionally biased toward basic residues; it reads GKTSAGRKGR. The segment at 163 to 197 is disordered; sequence GKTSAGRKGRGMQTRGTGTEKTRPSVRSNLNRSKK. The span at 186–197 shows a compositional bias: polar residues; it reads PSVRSNLNRSKK.

This sequence belongs to the eukaryotic ribosomal protein eL15 family.

This chain is Large ribosomal subunit protein eL15, found in Methanococcoides burtonii (strain DSM 6242 / NBRC 107633 / OCM 468 / ACE-M).